The primary structure comprises 284 residues: MVLDLLKSGVLLAVLASFTFSVMNALVKEASATLPAAEIVFFRSAIGTLLIYLLMRQAGVALSRQGVPMLLVRGVMGALYLVCYFYAIAHIPLADASILAHMSPFFVILFSALFLGERIPRAVYWLLLVVVLGALMIVKPFSYSSYSVYAVVGLLSAVFAAGASVAIRQLSARHHTYEIVFYFLAVATLVAIPLMWSDFVVPATLREWGLLLAIGVVSLLGQVFLTRAFSHESATIVAVTRYIGIVFNAGWGWLFWSEVPDALTIAGGVLIVVACIALSRTKKG.

Helical transmembrane passes span 2 to 22 (VLDL…TFSV), 34 to 54 (LPAA…IYLL), 74 to 94 (GVMG…IPLA), 96 to 116 (ASIL…LFLG), 122 to 142 (AVYW…KPFS), 147 to 167 (SVYA…SVAI), 179 to 199 (IVFY…WSDF), 209 to 229 (GLLL…TRAF), 236 to 256 (IVAV…WLFW), and 259 to 279 (VPDA…IALS). EamA domains are found at residues 8–138 (SGVL…LMIV) and 151–279 (VVGL…IALS).

This sequence belongs to the EamA transporter family.

It is found in the cell inner membrane. Functionally, transports the metallophore pseudopaline, which is involved in the acquisition of nickel and zinc, and thus enables bacterial growth inside the host, where metal access is limited. Is probably involved in the export of pseudopaline. In Pseudomonas aeruginosa (strain UCBPP-PA14), this protein is Pseudopaline exporter CntI.